We begin with the raw amino-acid sequence, 151 residues long: Minor curlin subunit (151 aa).

The signal sequence occupies residues 1 to 21 (MKNKLLFMMLTILGAPGIAAA).

It belongs to the CsgA/CsgB family.

The protein localises to the fimbrium. Its function is as follows. Curlin is the structural subunit of the curli. Curli are coiled surface structures that assemble preferentially at growth temperatures below 37 degrees Celsius. Curli can bind to fibronectin. The minor subunit is the nucleation component of curlin monomers. This is Minor curlin subunit (csgB) from Escherichia coli O157:H7.